We begin with the raw amino-acid sequence, 56 residues long: Small ribosomal subunit protein uS14 (56 aa).

Residues cysteine 21, cysteine 24, cysteine 39, and cysteine 42 each contribute to the Zn(2+) site.

It belongs to the universal ribosomal protein uS14 family. In terms of assembly, component of the 40S small ribosomal subunit. Zn(2+) serves as cofactor.

It localises to the cytoplasm. It is found in the cytosol. Its subcellular location is the rough endoplasmic reticulum. Functionally, component of the small ribosomal subunit. The ribosome is a large ribonucleoprotein complex responsible for the synthesis of proteins in the cell. The chain is Small ribosomal subunit protein uS14 (rps29) from Hippocampus comes (Tiger tail seahorse).